We begin with the raw amino-acid sequence, 183 residues long: Hypoxanthine/guanine phosphoribosyltransferase (183 aa).

It belongs to the purine/pyrimidine phosphoribosyltransferase family. Archaeal HPRT subfamily. Homodimer.

The protein resides in the cytoplasm. It catalyses the reaction IMP + diphosphate = hypoxanthine + 5-phospho-alpha-D-ribose 1-diphosphate. It carries out the reaction GMP + diphosphate = guanine + 5-phospho-alpha-D-ribose 1-diphosphate. The protein operates within purine metabolism; IMP biosynthesis via salvage pathway; IMP from hypoxanthine: step 1/1. Its function is as follows. Catalyzes a salvage reaction resulting in the formation of IMP that is energically less costly than de novo synthesis. The sequence is that of Hypoxanthine/guanine phosphoribosyltransferase from Methanocaldococcus infernus (strain DSM 11812 / JCM 15783 / ME).